The primary structure comprises 710 residues: Elongation factor G (710 aa).

In terms of domain architecture, tr-type G spans 8-290 (SQYRNIGISA…AIVEYLPSPM (283 aa)). GTP is bound by residues 17–24 (AHIDAGKT), 88–92 (DTPGH), and 142–145 (NKMD).

It belongs to the TRAFAC class translation factor GTPase superfamily. Classic translation factor GTPase family. EF-G/EF-2 subfamily.

Its subcellular location is the cytoplasm. Functionally, catalyzes the GTP-dependent ribosomal translocation step during translation elongation. During this step, the ribosome changes from the pre-translocational (PRE) to the post-translocational (POST) state as the newly formed A-site-bound peptidyl-tRNA and P-site-bound deacylated tRNA move to the P and E sites, respectively. Catalyzes the coordinated movement of the two tRNA molecules, the mRNA and conformational changes in the ribosome. The polypeptide is Elongation factor G (Buchnera aphidicola subsp. Baizongia pistaciae (strain Bp)).